A 251-amino-acid polypeptide reads, in one-letter code: Prolactin-7C1 (251 aa).

The N-terminal stretch at 1-30 (MLLSLTHPSFLAMLPMLLMSNLLQWEGVTS) is a signal peptide. Asn-57 is a glycosylation site (N-linked (GlcNAc...) asparagine). Cystine bridges form between Cys-101-Cys-217 and Cys-234-Cys-242.

Belongs to the somatotropin/prolactin family. In terms of tissue distribution, expressed exclusively in the placenta. Expressed in spongiotrophoblast cells and trophoblast giant cells of the junctional zone and in labyrinthine trophoblast.

It localises to the secreted. The sequence is that of Prolactin-7C1 (Prl7c1) from Mus musculus (Mouse).